Here is a 328-residue protein sequence, read N- to C-terminus: Malate dehydrogenase (328 aa).

Position 11–17 (11–17 (GAAGQIG)) interacts with NAD(+). Residues Arg94 and Arg100 each contribute to the substrate site. NAD(+) contacts are provided by residues Asn107, Gln114, and 131–133 (VGN). Substrate is bound by residues Asn133 and Arg164. The Proton acceptor role is filled by His189.

Belongs to the LDH/MDH superfamily. MDH type 2 family.

The catalysed reaction is (S)-malate + NAD(+) = oxaloacetate + NADH + H(+). Functionally, catalyzes the reversible oxidation of malate to oxaloacetate. The sequence is that of Malate dehydrogenase from Xylella fastidiosa (strain Temecula1 / ATCC 700964).